We begin with the raw amino-acid sequence, 356 residues long: Arginine kinase (356 aa).

The 83-residue stretch at 9–91 folds into the Phosphagen kinase N-terminal domain; that stretch reads KLEAGFQKLQ…FDPIIEDYHI (83 aa). 64–68 is an L-arginine binding site; it reads GVGIY. In terms of domain architecture, Phosphagen kinase C-terminal spans 119–356; sequence FVISTRVRCG…AELIKLEQSA (238 aa). ATP contacts are provided by residues 122–126 and His-185; that span reads STRVR. Glu-225 provides a ligand contact to L-arginine. Residue Arg-229 coordinates ATP. L-arginine is bound at residue Cys-271. Residues 280-284 and 309-314 each bind ATP; these read RASVH and RGTRGE. Glu-314 is a binding site for L-arginine.

It belongs to the ATP:guanido phosphotransferase family.

The enzyme catalyses L-arginine + ATP = N(omega)-phospho-L-arginine + ADP + H(+). The chain is Arginine kinase (ARGK) from Artemia franciscana (Brine shrimp).